Consider the following 375-residue polypeptide: Elongation factor Tu (375 aa).

The tr-type G domain occupies 10-205 (KPHINVGAIG…TMDKYFVIPE (196 aa)). Residues 19 to 26 (GHVDHGKT) are G1. 19 to 26 (GHVDHGKT) serves as a coordination point for GTP. Thr26 is a binding site for Mg(2+). The segment at 60 to 64 (GITIN) is G2. Residues 81-84 (DCPG) are G3. GTP contacts are provided by residues 81–85 (DCPGH) and 136–139 (NKMD). The G4 stretch occupies residues 136–139 (NKMD). The segment at 173–175 (SAF) is G5.

It belongs to the TRAFAC class translation factor GTPase superfamily. Classic translation factor GTPase family. EF-Tu/EF-1A subfamily. As to quaternary structure, monomer.

It localises to the cytoplasm. It catalyses the reaction GTP + H2O = GDP + phosphate + H(+). Its function is as follows. GTP hydrolase that promotes the GTP-dependent binding of aminoacyl-tRNA to the A-site of ribosomes during protein biosynthesis. The protein is Elongation factor Tu (tuf) of Spirochaeta aurantia.